The following is a 930-amino-acid chain: Semaphorin-6C (930 aa).

Residues 1 to 24 form the signal peptide; the sequence is MPRAPHFMPLLLLLLLLSLPHTQA. Over 25-604 the chain is Extracellular; sequence AFPQDPLPLL…ASASRSVPIP (580 aa). The Sema domain maps to 30 to 516; it reads PLPLLISDLQ…FSGCIVYLPL (487 aa). N70 carries an N-linked (GlcNAc...) asparagine glycan. Cystine bridges form between C111/C121, C139/C148, C262/C373, and C287/C332. A glycan (N-linked (GlcNAc...) asparagine) is linked at N286. An N-linked (GlcNAc...) asparagine glycan is attached at N437. Disulfide bonds link C479/C510, C519/C537, C525/C570, and C529/C545. Residues 554–593 are disordered; sequence TDVDQAGNQESMEHGDCQDGATGSQSGPGDSAYGVRRDLP. The chain crosses the membrane as a helical span at residues 605-625; the sequence is LLLASVAAAFALGASVSGLLV. The Cytoplasmic segment spans residues 626 to 930; the sequence is SCACRRAHRR…AVPNGGRFNF (305 aa). Disordered regions lie at residues 654–674, 716–761, 775–882, and 908–930; these read LARL…GDAV, GDPW…PGQA, HGPQ…PGKH, and SLKP…RFNF. Residues 829–844 show a composition bias toward low complexity; it reads ASAPARPALSAPAPRL.

This sequence belongs to the semaphorin family. As to expression, in adult tissues, expressed only in skeletal muscle.

It is found in the cell membrane. Shows growth cone collapsing activity on dorsal root ganglion (DRG) neurons in vitro. May be a stop signal for the DRG neurons in their target areas, and possibly also for other neurons. May also be involved in the maintenance and remodeling of neuronal connections. This chain is Semaphorin-6C (SEMA6C), found in Homo sapiens (Human).